The sequence spans 236 residues: Penton protein H240R (236 aa).

It belongs to the asfivirus H240R family.

It localises to the virion. In terms of biological role, forms the penton at the fivefold vertices of the icosahedral capsid. Together with the minor capsid proteins (p17, p49, and M1249L), forms a complicated network immediately below the outer capsid shell, stabilizing the whole capsid. The sequence is that of Penton protein H240R from African swine fever virus (isolate Pig/Kenya/KEN-50/1950) (ASFV).